The primary structure comprises 124 residues: Small ribosomal subunit protein uS12 (124 aa).

Positions 1 to 22 are disordered; sequence MATVNQLVRKPRKRKVAKSDVP. Residue Asp89 is modified to 3-methylthioaspartic acid. The disordered stretch occupies residues 99 to 124; it reads RGSLDTSGVQNRKQGRSKYGTKRPKK. The span at 111–124 shows a compositional bias: basic residues; it reads KQGRSKYGTKRPKK.

This sequence belongs to the universal ribosomal protein uS12 family. In terms of assembly, part of the 30S ribosomal subunit. Contacts proteins S8 and S17. May interact with IF1 in the 30S initiation complex.

Functionally, with S4 and S5 plays an important role in translational accuracy. Its function is as follows. Interacts with and stabilizes bases of the 16S rRNA that are involved in tRNA selection in the A site and with the mRNA backbone. Located at the interface of the 30S and 50S subunits, it traverses the body of the 30S subunit contacting proteins on the other side and probably holding the rRNA structure together. The combined cluster of proteins S8, S12 and S17 appears to hold together the shoulder and platform of the 30S subunit. This Marinomonas sp. (strain MWYL1) protein is Small ribosomal subunit protein uS12.